We begin with the raw amino-acid sequence, 438 residues long: Tol-Pal system protein TolB (438 aa).

The signal sequence occupies residues 1 to 36; it reads MTPAFRRADLTGFLRTYGAALILLLAAMLAWQPAQA.

It belongs to the TolB family. In terms of assembly, the Tol-Pal system is composed of five core proteins: the inner membrane proteins TolA, TolQ and TolR, the periplasmic protein TolB and the outer membrane protein Pal. They form a network linking the inner and outer membranes and the peptidoglycan layer.

Its subcellular location is the periplasm. In terms of biological role, part of the Tol-Pal system, which plays a role in outer membrane invagination during cell division and is important for maintaining outer membrane integrity. The chain is Tol-Pal system protein TolB from Bordetella pertussis (strain Tohama I / ATCC BAA-589 / NCTC 13251).